Here is a 213-residue protein sequence, read N- to C-terminus: Uridine kinase (213 aa).

G15–S22 contributes to the ATP binding site.

Belongs to the uridine kinase family.

It is found in the cytoplasm. The catalysed reaction is uridine + ATP = UMP + ADP + H(+). The enzyme catalyses cytidine + ATP = CMP + ADP + H(+). It functions in the pathway pyrimidine metabolism; CTP biosynthesis via salvage pathway; CTP from cytidine: step 1/3. Its pathway is pyrimidine metabolism; UMP biosynthesis via salvage pathway; UMP from uridine: step 1/1. This Serratia proteamaculans (strain 568) protein is Uridine kinase.